A 369-amino-acid chain; its full sequence is MQVTFCRLRTHQWCFILFNVILFHALLFGTDFVEEYFLHSLPYIDVKVLEIKNKARKLNIEPLRSNLSKYYVLSQSEICKGKNIFLLSLIFSSPGNGTRRDLIRKTWGNVTSVQGHPILTLFALGMPVSVTTQKEINKESCKNNDIIEGIFLDSSENQTLKIIAMIQWAVAFCPNALFILKVDEETFVNLPSLVDYLLNLKEHLEDIYVGRVLHQVTPNRDPQNRDFVPLSEYPEKYYPDYCSGEAFIMSQDVARMMYVVFKEVPMMVPADVFVGICAKFIGLIPIHSSRFSGKRHIRYNRCCYKFIFTSSEIADPEMPLAWKEINDGKECTLFETSYELISCKLLTYLDSFKRFHMGTIKNNLMYFAD.

Topologically, residues 1–12 (MQVTFCRLRTHQ) are cytoplasmic. Residues 13–33 (WCFILFNVILFHALLFGTDFV) form a helical; Signal-anchor for type II membrane protein membrane-spanning segment. At 34-369 (EEYFLHSLPY…IKNNLMYFAD (336 aa)) the chain is on the lumenal side. Residues N66, N96, and N109 are each glycosylated (N-linked (GlcNAc...) asparagine).

The protein belongs to the glycosyltransferase 31 family.

It is found in the golgi apparatus membrane. In terms of biological role, putative glycosyltransferase that could catalyze the transfer of galactose residues from UDP-alpha-D-galactose. In Homo sapiens (Human), this protein is Beta-1,3-galactosyltransferase 9.